Reading from the N-terminus, the 258-residue chain is Hydroxyacylglutathione hydrolase (258 aa).

Positions 52, 54, 56, 57, 109, 126, and 164 each coordinate Zn(2+).

Belongs to the metallo-beta-lactamase superfamily. Glyoxalase II family. As to quaternary structure, monomer. Requires Zn(2+) as cofactor.

It catalyses the reaction an S-(2-hydroxyacyl)glutathione + H2O = a 2-hydroxy carboxylate + glutathione + H(+). Its pathway is secondary metabolite metabolism; methylglyoxal degradation; (R)-lactate from methylglyoxal: step 2/2. Its function is as follows. Thiolesterase that catalyzes the hydrolysis of S-D-lactoyl-glutathione to form glutathione and D-lactic acid. The protein is Hydroxyacylglutathione hydrolase of Xylella fastidiosa (strain M23).